A 1086-amino-acid polypeptide reads, in one-letter code: 1,2-beta-oligoglucan phosphorylase (1086 aa).

Asp741 acts as the Proton donor in catalysis.

It belongs to the glycosyl hydrolase 94 family. As to quaternary structure, monomer.

It carries out the reaction [(1-&gt;2)-beta-D-glucosyl](n) + phosphate = [(1-&gt;2)-beta-D-glucosyl](n-1) + alpha-D-glucose 1-phosphate. Its function is as follows. Catalyzes the reversible phosphorolysis of beta-(1-&gt;2)-D-glucans. The minimum length of the substrate for the phosphorolytic reaction is 3 D-glucose units. The polypeptide is 1,2-beta-oligoglucan phosphorylase (Listeria innocua serovar 6a (strain ATCC BAA-680 / CLIP 11262)).